A 344-amino-acid chain; its full sequence is Ribosomal large subunit pseudouridine synthase D (344 aa).

The interval 1–29 (MMNRLINEQDGRNYSAKPDSSAAGSQENE) is disordered. The region spanning 43–116 (LRLDQALAQL…IPLKILFEDD (74 aa)) is the S4 RNA-binding domain. Residue aspartate 164 is part of the active site.

Belongs to the pseudouridine synthase RluA family.

The protein localises to the cytoplasm. It catalyses the reaction uridine(1911/1915/1917) in 23S rRNA = pseudouridine(1911/1915/1917) in 23S rRNA. In terms of biological role, responsible for synthesis of pseudouridine from uracil at positions 1911, 1915 and 1917 in 23S ribosomal RNA. The sequence is that of Ribosomal large subunit pseudouridine synthase D (rluD) from Nitrosomonas europaea (strain ATCC 19718 / CIP 103999 / KCTC 2705 / NBRC 14298).